The sequence spans 337 residues: MRAVLLPGSGEQPAAFCYQVNGSCPRTVHPLAIRVLIYLACAVGMLITVLGNLFVVFAVSYFKVLHTPTNFLLLSLALADMLLGLLVLPLSTVRSVESCWFFGDFLCRLHTYLDTLFCLTSIFHLCFISIDRHCAICDPLLYPSKFTVRIALRYIAAGWGIPAAYTAFFLYTDVVERALSQWLEEMPCVGSCQLLFNKFWGWLNFPAFFIPCLIMISLYLKIFVVATRQAQQIRTLSQSLSGAVKRERKAAKTLGIAVGIYLVCWLPFTVDTLVDSLLNFVTPPLVFDIFIWFAYFNSACNPIIYVFSYRWFRKALKLLLSREILSPRTQTADLFHD.

Residues 1–38 (MRAVLLPGSGEQPAAFCYQVNGSCPRTVHPLAIRVLIY) are Extracellular-facing. N-linked (GlcNAc...) asparagine glycosylation occurs at N21. 2 disulfide bridges follow: C24/C188 and C99/C192. A helical transmembrane segment spans residues 39 to 59 (LACAVGMLITVLGNLFVVFAV). Topologically, residues 60-70 (SYFKVLHTPTN) are cytoplasmic. Residues 71–91 (FLLLSLALADMLLGLLVLPLS) traverse the membrane as a helical segment. At 92 to 109 (TVRSVESCWFFGDFLCRL) the chain is on the extracellular side. The helical transmembrane segment at 110–130 (HTYLDTLFCLTSIFHLCFISI) threads the bilayer. Topologically, residues 131-154 (DRHCAICDPLLYPSKFTVRIALRY) are cytoplasmic. A helical membrane pass occupies residues 155–175 (IAAGWGIPAAYTAFFLYTDVV). Residues 176–189 (ERALSQWLEEMPCV) form an extracellular Loop 2 (ECL2) region. The Extracellular portion of the chain corresponds to 176–204 (ERALSQWLEEMPCVGSCQLLFNKFWGWLN). The chain crosses the membrane as a helical span at residues 205–225 (FPAFFIPCLIMISLYLKIFVV). Over 226 to 253 (ATRQAQQIRTLSQSLSGAVKRERKAAKT) the chain is Cytoplasmic. A helical transmembrane segment spans residues 254–274 (LGIAVGIYLVCWLPFTVDTLV). Residues 275-284 (DSLLNFVTPP) are Extracellular-facing. Residues 285-307 (LVFDIFIWFAYFNSACNPIIYVF) traverse the membrane as a helical segment. Over 308-337 (SYRWFRKALKLLLSREILSPRTQTADLFHD) the chain is Cytoplasmic.

The protein belongs to the G-protein coupled receptor 1 family.

It is found in the cell membrane. In terms of biological role, olfactory receptor specific for trimethylamine, a trace amine enriched in the urine of male rats, playing a role in social behavior. Also activated by N-methylpiperidine. Trimethylamine is present at high concentration in the urine of male after puberty and acts as an attractant. Trimethylamine-binding causes a conformation change that triggers signaling via G(s)-class of G alpha proteins (GNAL or GNAS). Also required to provide olfactory input into limbic brain areas to regulate emotional behaviors likely via modulation of the serotonin system. This is Trace amine-associated receptor 5 from Rattus norvegicus (Rat).